A 91-amino-acid polypeptide reads, in one-letter code: Alpha-defensin-related sequence 10 (91 aa).

Positions 1–19 (MKKLVLLSAFVLLAFQVQA) are cleaved as a signal peptide. Positions 20–65 (DSIQNTDEETKTEEQPGEENQAMSVSFGDPEGSALQDAAVGMARPC) are excised as a propeptide. Residues 21–52 (SIQNTDEETKTEEQPGEENQAMSVSFGDPEGS) form a disordered region. Repeat copies occupy residues 65 to 67 (CPP), 68 to 70 (CPS), 71 to 73 (CPS), 74 to 76 (CPW), 77 to 79 (CPM), 80 to 82 (CPR), and 83 to 85 (CPS). The 7 X 3 AA tandem repeats of C-P-X stretch occupies residues 65 to 85 (CPPCPSCPSCPWCPMCPRCPS).

It belongs to the alpha-defensin family. As to expression, paneth cells of the small bowel.

Its subcellular location is the secreted. Its function is as follows. Apparent precursor of a secreted, cationic, proline- and cysteine-rich peptide that contains Cys-Pro-Xaa repeats. Unlike cryptdin, the proposed mature peptide region lacks the structural motif characteristic of defensins. It may have microbicidal activities. This is Alpha-defensin-related sequence 10 (Defa-rs10) from Mus musculus (Mouse).